The following is a 300-amino-acid chain: UDP-3-O-acyl-N-acetylglucosamine deacetylase (300 aa).

Zn(2+)-binding residues include His-78, His-237, and Asp-241. His-264 (proton donor) is an active-site residue.

Belongs to the LpxC family. Requires Zn(2+) as cofactor.

It carries out the reaction a UDP-3-O-[(3R)-3-hydroxyacyl]-N-acetyl-alpha-D-glucosamine + H2O = a UDP-3-O-[(3R)-3-hydroxyacyl]-alpha-D-glucosamine + acetate. The protein operates within glycolipid biosynthesis; lipid IV(A) biosynthesis; lipid IV(A) from (3R)-3-hydroxytetradecanoyl-[acyl-carrier-protein] and UDP-N-acetyl-alpha-D-glucosamine: step 2/6. Its function is as follows. Catalyzes the hydrolysis of UDP-3-O-myristoyl-N-acetylglucosamine to form UDP-3-O-myristoylglucosamine and acetate, the committed step in lipid A biosynthesis. The protein is UDP-3-O-acyl-N-acetylglucosamine deacetylase of Acinetobacter baumannii (strain AB307-0294).